The primary structure comprises 926 residues: Alpha-L-rhamnosidase (926 aa).

Residues 1 to 25 form the signal peptide; it reads MILHKSVFKSYIYVLTYFVFFSVMS. A lipid anchor (N-palmitoyl cysteine) is attached at Cys26. The S-diacylglycerol cysteine moiety is linked to residue Cys26. Alpha-L-rhamnose contacts are provided by residues Asp504, 508–510, Asp517, and Trp569; that span reads RDE. Glu510 functions as the Proton donor in the catalytic mechanism. Glu779 serves as the catalytic Proton acceptor. His800 contributes to the alpha-L-rhamnose binding site.

It belongs to the glycosyl hydrolase 78 family.

The protein resides in the cell membrane. It catalyses the reaction Hydrolysis of terminal non-reducing alpha-L-rhamnose residues in alpha-L-rhamnosides.. Its function is as follows. Alpha-L-rhamnosidase involved in ulvan degradation. Ulvan is the main polysaccharide component of the Ulvales (green seaweed) cell wall. It is composed of disaccharide building blocks comprising 3-sulfated rhamnose (Rha3S) linked to D-glucuronic acid (GlcA), L-iduronic acid (IduA), or D-xylose (Xyl). Alpha-L-rhamnosidase converts Rha-Xyl-Rha3S, the product of a sulfatase acting on Rha3S-Xyl-Rha3S oligosaccharides, to Rha and Xyl-Rha3S. The enzyme is able to degrade p-nitrophenyl-alpha-L-rhamnopyranoside (PNP-Rha) in vitro. The protein is Alpha-L-rhamnosidase of Formosa agariphila (strain DSM 15362 / KCTC 12365 / LMG 23005 / KMM 3901 / M-2Alg 35-1).